The chain runs to 161 residues: Small heat shock protein hspJ (161 aa).

The 110-residue stretch at 52–161 (SKFTSLNPKL…FEKEIKINIE (110 aa)) folds into the sHSP domain.

It belongs to the small heat shock protein (HSP20) family.

The protein is Small heat shock protein hspJ (hspJ) of Dictyostelium discoideum (Social amoeba).